Reading from the N-terminus, the 358-residue chain is MKKLLIMAAGTGGHIFPGLAIADTMQARGWEVTWLGTEHGMERDLVPKSGIAMDTISFAGLRGKGLRHTVTGVLRLLASFGTCFSILARRKPGVVLGMGGYVTVPGGWMAKLRGVPLVLLNADAALLLSNKALTPIAQRVLFGFPADFGNAADKALVTGNPVRAEISALMPPAQRYAQHSGALKILVVGGSLGAQALNAALPAALALIPAEQRPLVTHQSGKKNIDDLRARYAQAGVTAEVVDFIDDMPRRYADADLVICRAGAITVSELTAAGVASVLVPLLVSTTTHQRDNAHWMEQQQAAIHLPQSELTAQGLADLLQNMTREKCKQMAEAAYANGRRDANAAIADVLEKLVKNT.

UDP-N-acetyl-alpha-D-glucosamine contacts are provided by residues threonine 11 to glycine 13, arginine 163, serine 191, isoleucine 245, and glutamine 290.

It belongs to the glycosyltransferase 28 family. MurG subfamily.

The protein localises to the cell inner membrane. The catalysed reaction is di-trans,octa-cis-undecaprenyl diphospho-N-acetyl-alpha-D-muramoyl-L-alanyl-D-glutamyl-meso-2,6-diaminopimeloyl-D-alanyl-D-alanine + UDP-N-acetyl-alpha-D-glucosamine = di-trans,octa-cis-undecaprenyl diphospho-[N-acetyl-alpha-D-glucosaminyl-(1-&gt;4)]-N-acetyl-alpha-D-muramoyl-L-alanyl-D-glutamyl-meso-2,6-diaminopimeloyl-D-alanyl-D-alanine + UDP + H(+). The protein operates within cell wall biogenesis; peptidoglycan biosynthesis. Functionally, cell wall formation. Catalyzes the transfer of a GlcNAc subunit on undecaprenyl-pyrophosphoryl-MurNAc-pentapeptide (lipid intermediate I) to form undecaprenyl-pyrophosphoryl-MurNAc-(pentapeptide)GlcNAc (lipid intermediate II). The sequence is that of UDP-N-acetylglucosamine--N-acetylmuramyl-(pentapeptide) pyrophosphoryl-undecaprenol N-acetylglucosamine transferase from Herminiimonas arsenicoxydans.